Consider the following 556-residue polypeptide: Formate--tetrahydrofolate ligase (556 aa).

Residue 65–72 (TPAGEGKS) participates in ATP binding.

It belongs to the formate--tetrahydrofolate ligase family.

It carries out the reaction (6S)-5,6,7,8-tetrahydrofolate + formate + ATP = (6R)-10-formyltetrahydrofolate + ADP + phosphate. Its pathway is one-carbon metabolism; tetrahydrofolate interconversion. The chain is Formate--tetrahydrofolate ligase from Streptococcus uberis (strain ATCC BAA-854 / 0140J).